Here is a 289-residue protein sequence, read N- to C-terminus: Probable porphobilinogen deaminase (289 aa).

S-(dipyrrolylmethanemethyl)cysteine is present on Cys234.

This sequence belongs to the HMBS family. Dipyrromethane serves as cofactor.

It catalyses the reaction 4 porphobilinogen + H2O = hydroxymethylbilane + 4 NH4(+). The protein operates within porphyrin-containing compound metabolism; protoporphyrin-IX biosynthesis; coproporphyrinogen-III from 5-aminolevulinate: step 2/4. Tetrapolymerization of the monopyrrole PBG into the hydroxymethylbilane pre-uroporphyrinogen in several discrete steps. This is Probable porphobilinogen deaminase (hemC) from Archaeoglobus fulgidus (strain ATCC 49558 / DSM 4304 / JCM 9628 / NBRC 100126 / VC-16).